We begin with the raw amino-acid sequence, 539 residues long: Protein lin-14 (539 aa).

Disordered regions lie at residues 162 to 230 (PTLP…SNHS) and 262 to 293 (ETAP…PRKP). Composition is skewed to polar residues over residues 163 to 183 (TLPN…GTDD) and 193 to 214 (SVDS…NQNI). Residues 274–284 (NGTTNGTAKAG) are compositionally biased toward low complexity. The involved in sequence-specific DNA-binding stretch occupies residues 296–440 (DDIVKIVRNQ…CRRVRHAKKT (145 aa)).

Post-translationally, cleaved by caspase ced-3 in vitro. High levels in hypodermal, intestinal, body wall muscle, nerve ring, and ventral nerve cord cells of embryos and L1 animals.

The protein resides in the nucleus. In terms of biological role, heterochronic protein which controls the choice of stage specific cell fates. Involved in the temporal progression of vulval fate patterning, possibly by inhibiting lin-12. Acts as a transcription factor involved in the stage-specific repression of various genes, including insulin/insulin-like growth factor gene ins-33 and neuropeptide-encoding gene nlp-45. Binds to the consensus sequence 5'-[CT]GGA[AG]-3' in the regulatory elements of target genes. Plays a role in governing the developmental timing of male tail tip morphogenesis. Plays a role in controlling the timing of seam cell development during the larval stages. Plays a role in promoting survival at high temperatures in larvae. Involved in maintenance of the architecture of the ventral nerve cord, perhaps acting via modulating expression of the immunoglobulin domain gene zig-4. Its function is as follows. May specify L2 and later cell fates, creating a temporal switch. Functionally, may be involved in specifying L1 cell fates. This is Protein lin-14 from Caenorhabditis elegans.